The following is an 839-amino-acid chain: MSAFRFWSGLLMLLGFLCPRSSPCGISTHIEIGHRALEFLHLQDGSINYKELLLRHQDAYQAGSVFPDSFYPSICERGQFHDVSESTHWTPFLNASVHYIRKNYPLPWDEDTEKLVAFLFGITSHMVADVNWHSLGIEQGFLRTMAAIDFHNSYPEAHPAGDFGGDVLSQFEFKFNYLSRHWYVPAEDLLGIYRELYGRIVITKKAIVDCSYLQFLEMYAEMLAISKLYPTYSVKSPFLVEQFQEYFLGGLEDMAFWSTNIYHLTSYMLKNGTSNCNLPENPLFITCGGQQNNTHGSKVQKNGFHKNVTAALTKNIGKHINYTKRGVFFSVDSWTMDSLSFMYKSLERSIREMFIGSSQPLTHVSSPAASYYLSFPYTRLGWAMTSADLNQDGYGDLVVGAPGYSHPGRIHVGRVYLIYGNDLGLPRIDLDLDKEAHGILEGFQPSGRFGSAVAVLDFNVDGVPDLAVGAPSVGSEKLTYTGAVYVYFGSKQGQLSSSPNVTISCQDTYCNLGWTLLAADVNGDSEPDLVIGSPFAPGGGKQKGIVAAFYSGSSYSSREKLNVEAANWMVKGEEDFAWLGYSLHGVNVNNRTLLLAGSPTWKDTSSQGHLFRTRDEKQSPGRVYGYFPPICQSWFTISGDKAMGKLGTSLSSGHVMVNGTRTQVLLVGAPTQDVVSKVSFLTMTLHQGGSTRMYELTPDSQPSLLSTFSGNRRFSRFGGVLHLSDLDNDGLDEIIVAAPLRITDATAGLMGEEDGRVYVFNGKQITVGDVTGKCKSWVTPCPEEKAQYVLISPEAGSRFGSSVITVRSKEKNQVIIAAGRSSLGARLSGVLHIYRLGQD.

Positions 1–23 (MSAFRFWSGLLMLLGFLCPRSSP) are cleaved as a signal peptide. Residues asparagine 94, asparagine 271, asparagine 292, asparagine 307, and asparagine 321 are each glycosylated (N-linked (GlcNAc...) asparagine). FG-GAP repeat units lie at residues 365–427 (SSPA…GLPR), 434–496 (KEAH…GQLS), 498–558 (SPNV…YSSR), 562–622 (NVEA…SPGR), 632–692 (QSWF…GSTR), 703–769 (SLLS…TVGD), and 787–839 (QYVL…LGQD). N-linked (GlcNAc...) asparagine glycosylation is found at asparagine 500, asparagine 590, and asparagine 658.

The protein belongs to the GPLD1 family. As to quaternary structure, monomer. In terms of processing, glycosylated.

The protein localises to the secreted. It carries out the reaction a 6-(alpha-D-glucosaminyl)-1-(1,2-diacyl-sn-glycero-3-phospho)-1D-myo-inositol + H2O = 6-(alpha-D-glucosaminyl)-1D-myo-inositol + a 1,2-diacyl-sn-glycero-3-phosphate + H(+). Its function is as follows. This protein hydrolyzes the inositol phosphate linkage in proteins anchored by phosphatidylinositol glycans (GPI-anchor) thus releasing these proteins from the membrane. The chain is Phosphatidylinositol-glycan-specific phospholipase D (GPLD1) from Bos taurus (Bovine).